A 159-amino-acid polypeptide reads, in one-letter code: ATP synthase subunit b 2 (159 aa).

A helical transmembrane segment spans residues 1–21 (MDATFWAFIALVIFVAIVVYM).

This sequence belongs to the ATPase B chain family. In terms of assembly, F-type ATPases have 2 components, F(1) - the catalytic core - and F(0) - the membrane proton channel. F(1) has five subunits: alpha(3), beta(3), gamma(1), delta(1), epsilon(1). F(0) has three main subunits: a(1), b(2) and c(10-14). The alpha and beta chains form an alternating ring which encloses part of the gamma chain. F(1) is attached to F(0) by a central stalk formed by the gamma and epsilon chains, while a peripheral stalk is formed by the delta and b chains.

It is found in the cell inner membrane. Its function is as follows. F(1)F(0) ATP synthase produces ATP from ADP in the presence of a proton or sodium gradient. F-type ATPases consist of two structural domains, F(1) containing the extramembraneous catalytic core and F(0) containing the membrane proton channel, linked together by a central stalk and a peripheral stalk. During catalysis, ATP synthesis in the catalytic domain of F(1) is coupled via a rotary mechanism of the central stalk subunits to proton translocation. In terms of biological role, component of the F(0) channel, it forms part of the peripheral stalk, linking F(1) to F(0). In Brucella abortus (strain S19), this protein is ATP synthase subunit b 2.